Reading from the N-terminus, the 392-residue chain is Small ribosomal subunit protein uS9m (392 aa).

Over residues 8–25 the composition is skewed to low complexity; it reads RSSRAMSSASPASASDSD. Residues 8 to 27 are disordered; that stretch reads RSSRAMSSASPASASDSDTS.

This sequence belongs to the universal ribosomal protein uS9 family. Component of the mitochondrial ribosome small subunit (28S) which comprises a 12S rRNA and about 30 distinct proteins.

The protein localises to the mitochondrion. The polypeptide is Small ribosomal subunit protein uS9m (mrps-9) (Caenorhabditis elegans).